The sequence spans 404 residues: Zinc finger CCCH domain-containing protein 3 (404 aa).

5 consecutive C3H1-type zinc fingers follow at residues 47–75 (RPGE…HPTH), 90–118 (RIGQ…HPKD), 135–163 (RLGE…HPQP), 261–289 (SSDQ…HPGV), and 307–335 (RPGQ…HPML). Polar residues predominate over residues 350 to 374 (FASPVTTHQRISPTPNRSDSKSLSN). A disordered region spans residues 350 to 404 (FASPVTTHQRISPTPNRSDSKSLSNGKPDVKKESSETEKPDNGEVQDLSEDASSP). Residues 377–391 (PDVKKESSETEKPDN) are compositionally biased toward basic and acidic residues.

Its subcellular location is the nucleus. Possesses RNA-binding and ribonuclease activities in vitro. The polypeptide is Zinc finger CCCH domain-containing protein 3 (Arabidopsis thaliana (Mouse-ear cress)).